Consider the following 90-residue polypeptide: Barrier-to-autointegration factor (90 aa).

It belongs to the BAF family. May interact with MAD1.

It localises to the nucleus. It is found in the cytoplasm. The protein localises to the chromosome. Functionally, plays fundamental roles in nuclear assembly, chromatin organization, gene expression and gonad development. May potently compress chromatin structure and be involved in membrane recruitment and chromatin decondensation during nuclear assembly. Functions are required in both M phase and interphase of the cell cycle. This is Barrier-to-autointegration factor (baf) from Drosophila melanogaster (Fruit fly).